A 1044-amino-acid polypeptide reads, in one-letter code: Probable translation initiation factor IF-2 (1044 aa).

A DOD-type homing endonuclease domain is found at 173 to 265; it reads FAGTIFGREN…LSLILLRLGI (93 aa). In terms of domain architecture, tr-type G spans 451 to 668; the sequence is TTETHNFIAN…LIAGLSQKYL (218 aa). GTP-binding positions include 524-528 and 578-581; these read DTPGH and NKID.

Belongs to the TRAFAC class translation factor GTPase superfamily. Classic translation factor GTPase family. IF-2 subfamily. In terms of processing, this protein undergoes a protein self splicing that involves a post-translational excision of the intervening region (intein) followed by peptide ligation.

In terms of biological role, function in general translation initiation by promoting the binding of the formylmethionine-tRNA to ribosomes. Seems to function along with eIF-2. This chain is Probable translation initiation factor IF-2 (infB), found in Pyrococcus horikoshii (strain ATCC 700860 / DSM 12428 / JCM 9974 / NBRC 100139 / OT-3).